Consider the following 551-residue polypeptide: Adenine deaminase (551 aa).

The protein belongs to the metallo-dependent hydrolases superfamily. Adenine deaminase family. Mn(2+) is required as a cofactor.

It catalyses the reaction adenine + H2O + H(+) = hypoxanthine + NH4(+). The polypeptide is Adenine deaminase (Methanosarcina barkeri (strain Fusaro / DSM 804)).